We begin with the raw amino-acid sequence, 219 residues long: Large ribosomal subunit protein bL25 (219 aa).

Residues 176–219 (VTVVPPTDEPSEEEVEAMEGESATEEPEVVDEDKEDDEEENKED) form a disordered region. A compositionally biased stretch (acidic residues) spans 184-219 (EPSEEEVEAMEGESATEEPEVVDEDKEDDEEENKED).

This sequence belongs to the bacterial ribosomal protein bL25 family. CTC subfamily. As to quaternary structure, part of the 50S ribosomal subunit; part of the 5S rRNA/L5/L18/L25 subcomplex. Contacts the 5S rRNA. Binds to the 5S rRNA independently of L5 and L18.

This is one of the proteins that binds to the 5S RNA in the ribosome where it forms part of the central protuberance. The polypeptide is Large ribosomal subunit protein bL25 (Staphylococcus epidermidis (strain ATCC 12228 / FDA PCI 1200)).